The sequence spans 246 residues: Myelin-oligodendrocyte glycoprotein (246 aa).

Positions 1-28 (MASLLSSSLPSCLPSLLFLLLQLTSSSA) are cleaved as a signal peptide. Residues 29–144 (GQFRVIGPGH…EEAAMELKVE (116 aa)) form the Ig-like V-type domain. The Extracellular portion of the chain corresponds to 29–153 (GQFRVIGPGH…EDPFYWINPG (125 aa)). Cys-52 and Cys-126 are oxidised to a cystine. A glycan (N-linked (GlcNAc...) asparagine) is linked at Asn-59. Residues 154–174 (VLVLIAVLPVLLLQITVGLVF) traverse the membrane as a helical segment. Topologically, residues 175-209 (LCLQRRLRGKLWAEIENLHRTFDPHFLMVPCWKIT) are cytoplasmic. The helical transmembrane segment at 210–230 (LFVIVPVLGPLVALIICYNWL) threads the bilayer. The Extracellular portion of the chain corresponds to 231–246 (HRRLAGQFLEELRNPF).

Belongs to the immunoglobulin superfamily. BTN/MOG family. Homodimer. As to expression, found exclusively in the CNS, where it is localized on the surface of myelin and oligodendrocyte cytoplasmic membranes.

The protein resides in the membrane. Mediates homophilic cell-cell adhesion. Minor component of the myelin sheath. May be involved in completion and/or maintenance of the myelin sheath and in cell-cell communication. This chain is Myelin-oligodendrocyte glycoprotein (MOG), found in Bos taurus (Bovine).